The primary structure comprises 803 residues: Integrin beta-1 (803 aa).

An N-terminal signal peptide occupies residues 1–24; that stretch reads MAETNLTLLTWAGILCCLIWSGSA. Blocked amino end (Gln) is present on Gln-25. The Extracellular portion of the chain corresponds to 25-733; the sequence is QQGGSDCIKA…ETPECPSGPD (709 aa). One can recognise a PSI domain in the interval 30 to 80; it reads DCIKANAKSCGECIQAGPNCGWCKKTDFLQEGEPTSARCDDLAALKSKGCP. 22 cysteine pairs are disulfide-bonded: Cys-31–Cys-49, Cys-39–Cys-469, Cys-42–Cys-68, Cys-52–Cys-79, Cys-211–Cys-217, Cys-265–Cys-305, Cys-405–Cys-419, Cys-439–Cys-467, Cys-471–Cys-491, Cys-482–Cys-494, Cys-496–Cys-505, Cys-507–Cys-538, Cys-521–Cys-536, Cys-530–Cys-541, Cys-543–Cys-558, Cys-560–Cys-581, Cys-565–Cys-579, Cys-573–Cys-584, Cys-586–Cys-595, Cys-597–Cys-620, Cys-604–Cys-618, and Cys-612–Cys-623. The region spanning 144-382 is the VWFA domain; it reads DYPIDLYYLM…QLIIDAYNSL (239 aa). Mg(2+) is bound by residues Ser-156 and Ser-158. Ca(2+) is bound by residues Ser-158, Asp-161, Asp-162, and Glu-193. Positions 211–217 are CX3CL1-binding; that stretch reads CTGDQNC. An N-linked (GlcNAc...) asparagine glycan is attached at Asn-216. Ca(2+)-binding residues include Asn-248, Asp-250, Pro-252, and Glu-253. Glu-253 lines the Mg(2+) pocket. N-linked (GlcNAc...) asparagine glycosylation occurs at Asn-273. Residues 299–318 form a CX3CL1-binding region; it reads LPNDGKCHLENNMYTMSHYY. N-linked (GlcNAc...) asparagine glycans are attached at residues Asn-367, Asn-410, Asn-421, Asn-433, Asn-445, and Asn-486. Residues 387 to 470 are interaction with TMEM182; sequence ILENSKLPKE…IHLQFICDCL (84 aa). I-EGF domains lie at 471 to 506, 507 to 559, 560 to 596, and 597 to 636; these read CQSE…RLCE, CSTD…KYCE, CDNF…SACD, and CSLD…PTCE. N-linked (GlcNAc...) asparagine glycosylation occurs at Asn-525. Asn-589 carries an N-linked (GlcNAc...) asparagine glycan. Asn-624 is a glycosylation site (N-linked (GlcNAc...) asparagine). Disulfide bonds link Cys-625–Cys-635, Cys-638–Cys-641, Cys-645–Cys-696, Cys-651–Cys-670, Cys-654–Cys-666, and Cys-704–Cys-728. An N-linked (GlcNAc...) asparagine glycan is attached at Asn-674. A helical membrane pass occupies residues 734-756; that stretch reads IIPIVAGVVAGIVLIGLALLLIW. At 757-803 the chain is on the cytoplasmic side; sequence KLLMIIHDRREFAKFEKEKMNAKWDTGENPIYKSAVTTVVNPKYEGK. Phosphotyrosine; by Tyr-kinases is present on Tyr-788.

The protein belongs to the integrin beta chain family. As to quaternary structure, heterodimer of an alpha and a beta subunit. Beta-1 associates with either alpha-1, alpha-2, alpha-3, alpha-4, alpha-5, alpha-6, alpha-7, alpha-8, alpha-9, alpha-10, alpha-11 or alpha-V. Interacts with TMEM182 and LAMB1. As to expression, expressed on surface of embryonic fibroblasts (at protein level).

Its subcellular location is the cell membrane. It localises to the cell projection. It is found in the invadopodium membrane. The protein resides in the ruffle membrane. The protein localises to the melanosome. Its subcellular location is the lamellipodium. It localises to the ruffle. It is found in the cell junction. The protein resides in the focal adhesion. Its function is as follows. Integrins alpha-1/beta-1, alpha-2/beta-1, alpha-10/beta-1 and alpha-11/beta-1 are receptors for collagen. Integrins alpha-1/beta-1 and alpha-2/beta-1 recognize the proline-hydroxylated sequence G-F-P-G-E-R in collagen. Integrins alpha-2/beta-1, alpha-3/beta-1, alpha-4/beta-1, alpha-5/beta-1, alpha-8/beta-1, alpha-10/beta-1, alpha-11/beta-1 and alpha-V/beta-1 are receptors for fibronectin. Alpha-4/beta-1 recognizes one or more domains within the alternatively spliced CS-1 and CS-5 regions of fibronectin. Integrin alpha-5/beta-1 is a receptor for fibrinogen. Integrin alpha-1/beta-1, alpha-2/beta-1, alpha-6/beta-1 and alpha-7/beta-1 are receptors for lamimin. Integrin alpha-6/beta-1 (ITGA6:ITGB1) is present in oocytes and is involved in sperm-egg fusion. Integrin alpha-4/beta-1 is a receptor for VCAM1 and recognizes the sequence Q-I-D-S in VCAM1. Integrin alpha-9/beta-1 is a receptor for VCAM1, cytotactin and osteopontin. It recognizes the sequence A-E-I-D-G-I-E-L in cytotactin. Integrin alpha-3/beta-1 is a receptor for epiligrin, thrombospondin and CSPG4. Integrin alpha-3/beta-1 provides a docking site for FAP (seprase) at invadopodia plasma membranes in a collagen-dependent manner and hence may participate in the adhesion, formation of invadopodia and matrix degradation processes, promoting cell invasion. Alpha-3/beta-1 may mediate with LGALS3 the stimulation by CSPG4 of endothelial cells migration. Integrin alpha-V/beta-1 is a receptor for vitronectin. Beta-1 integrins recognize the sequence R-G-D in a wide array of ligands. When associated with alpha-7/beta-1 integrin, regulates cell adhesion and laminin matrix deposition. Involved in promoting endothelial cell motility and angiogenesis. Involved in osteoblast compaction through the fibronectin fibrillogenesis cell-mediated matrix assembly process and the formation of mineralized bone nodules. May be involved in up-regulation of the activity of kinases such as PKC via binding to KRT1. Together with KRT1 and RACK1, serves as a platform for SRC activation or inactivation. ITGA4:ITGB1 binds to fractalkine (CX3CL1) and may act as its coreceptor in CX3CR1-dependent fractalkine signaling. ITGA4:ITGB1 and ITGA5:ITGB1 bind to PLA2G2A via a site (site 2) which is distinct from the classical ligand-binding site (site 1) and this induces integrin conformational changes and enhanced ligand binding to site 1. ITGA5:ITGB1 acts as a receptor for fibrillin-1 (FBN1) and mediates R-G-D-dependent cell adhesion to FBN1. ITGA5:ITGB1 acts as a receptor for fibronectin FN1 and mediates R-G-D-dependent cell adhesion to FN1. ITGA5:ITGB1 is a receptor for IL1B and binding is essential for IL1B signaling. ITGA5:ITGB3 is a receptor for soluble CD40LG and is required for CD40/CD40LG signaling. Plays an important role in myoblast differentiation and fusion during skeletal myogenesis. This chain is Integrin beta-1 (ITGB1), found in Gallus gallus (Chicken).